A 274-amino-acid polypeptide reads, in one-letter code: Undecaprenyl-diphosphatase (274 aa).

Transmembrane regions (helical) follow at residues 40–60 (PGAA…LMFF), 90–110 (WFII…KDVI), 114–134 (FRSL…LGVA), 147–167 (ISLR…IPGV), 190–210 (YAFL…LKDI), 221–241 (PTIV…AWLL), and 252–272 (FVLY…TGVI).

Belongs to the UppP family.

The protein localises to the cell membrane. The enzyme catalyses di-trans,octa-cis-undecaprenyl diphosphate + H2O = di-trans,octa-cis-undecaprenyl phosphate + phosphate + H(+). In terms of biological role, catalyzes the dephosphorylation of undecaprenyl diphosphate (UPP). Confers resistance to bacitracin. In Nocardioides sp. (strain ATCC BAA-499 / JS614), this protein is Undecaprenyl-diphosphatase.